We begin with the raw amino-acid sequence, 175 residues long: CDP-archaeol synthase (175 aa).

4 helical membrane passes run 41-61, 78-98, 122-142, and 150-170; these read GLFS…WLSM, YASA…GDMF, FVVG…VSNF, and VLIM…FIGV.

Belongs to the CDP-archaeol synthase family. Mg(2+) serves as cofactor.

It is found in the cell membrane. The catalysed reaction is 2,3-bis-O-(geranylgeranyl)-sn-glycerol 1-phosphate + CTP + H(+) = CDP-2,3-bis-O-(geranylgeranyl)-sn-glycerol + diphosphate. The protein operates within membrane lipid metabolism; glycerophospholipid metabolism. Its function is as follows. Catalyzes the formation of CDP-2,3-bis-(O-geranylgeranyl)-sn-glycerol (CDP-archaeol) from 2,3-bis-(O-geranylgeranyl)-sn-glycerol 1-phosphate (DGGGP) and CTP. This reaction is the third ether-bond-formation step in the biosynthesis of archaeal membrane lipids. This is CDP-archaeol synthase from Methanosarcina acetivorans (strain ATCC 35395 / DSM 2834 / JCM 12185 / C2A).